A 191-amino-acid polypeptide reads, in one-letter code: Xanthine phosphoribosyltransferase (191 aa).

Xanthine-binding residues include leucine 20 and asparagine 27. 128-132 lines the 5-phospho-alpha-D-ribose 1-diphosphate pocket; the sequence is ANGQA. Lysine 156 contacts xanthine.

It belongs to the purine/pyrimidine phosphoribosyltransferase family. Xpt subfamily. As to quaternary structure, homodimer.

The protein localises to the cytoplasm. The enzyme catalyses XMP + diphosphate = xanthine + 5-phospho-alpha-D-ribose 1-diphosphate. Its pathway is purine metabolism; XMP biosynthesis via salvage pathway; XMP from xanthine: step 1/1. Converts the preformed base xanthine, a product of nucleic acid breakdown, to xanthosine 5'-monophosphate (XMP), so it can be reused for RNA or DNA synthesis. The protein is Xanthine phosphoribosyltransferase of Levilactobacillus brevis (strain ATCC 367 / BCRC 12310 / CIP 105137 / JCM 1170 / LMG 11437 / NCIMB 947 / NCTC 947) (Lactobacillus brevis).